Here is a 381-residue protein sequence, read N- to C-terminus: Chaperone protein DnaJ (381 aa).

A J domain is found at 5–70 (DYYEVLGIER…EKRSAYDQFG (66 aa)). The CR-type zinc finger occupies 137–215 (GTTVDIRVPR…CHGEGRVRET (79 aa)). 8 residues coordinate Zn(2+): Cys150, Cys153, Cys167, Cys170, Cys189, Cys192, Cys203, and Cys206. 4 CXXCXGXG motif repeats span residues 150–157 (CEHCDGDG), 167–174 (CPTCHGQG), 189–196 (CPTCHGAG), and 203–210 (CRKCHGEG).

It belongs to the DnaJ family. Homodimer. Requires Zn(2+) as cofactor.

The protein localises to the cytoplasm. In terms of biological role, participates actively in the response to hyperosmotic and heat shock by preventing the aggregation of stress-denatured proteins and by disaggregating proteins, also in an autonomous, DnaK-independent fashion. Unfolded proteins bind initially to DnaJ; upon interaction with the DnaJ-bound protein, DnaK hydrolyzes its bound ATP, resulting in the formation of a stable complex. GrpE releases ADP from DnaK; ATP binding to DnaK triggers the release of the substrate protein, thus completing the reaction cycle. Several rounds of ATP-dependent interactions between DnaJ, DnaK and GrpE are required for fully efficient folding. Also involved, together with DnaK and GrpE, in the DNA replication of plasmids through activation of initiation proteins. This chain is Chaperone protein DnaJ, found in Chromohalobacter salexigens (strain ATCC BAA-138 / DSM 3043 / CIP 106854 / NCIMB 13768 / 1H11).